A 154-amino-acid polypeptide reads, in one-letter code: Large ribosomal subunit protein uL13 (154 aa).

This sequence belongs to the universal ribosomal protein uL13 family. In terms of assembly, part of the 50S ribosomal subunit.

This protein is one of the early assembly proteins of the 50S ribosomal subunit, although it is not seen to bind rRNA by itself. It is important during the early stages of 50S assembly. This is Large ribosomal subunit protein uL13 from Bartonella tribocorum (strain CIP 105476 / IBS 506).